A 284-amino-acid polypeptide reads, in one-letter code: RNase adapter protein RapZ (284 aa).

Gly-8 to Ser-15 is a binding site for ATP. Asp-56 to Asn-59 serves as a coordination point for GTP. Residues Arg-266–Pro-284 are RNA-binding.

It belongs to the RapZ-like family. RapZ subfamily. As to quaternary structure, homotrimer.

Its function is as follows. Modulates the synthesis of GlmS, by affecting the processing and stability of the regulatory small RNA GlmZ. When glucosamine-6-phosphate (GlcN6P) concentrations are high in the cell, RapZ binds GlmZ and targets it to cleavage by RNase E. Consequently, GlmZ is inactivated and unable to activate GlmS synthesis. Under low GlcN6P concentrations, RapZ is sequestered and inactivated by an other regulatory small RNA, GlmY, preventing GlmZ degradation and leading to synthesis of GlmS. The sequence is that of RNase adapter protein RapZ from Escherichia coli O1:K1 / APEC.